An 847-amino-acid polypeptide reads, in one-letter code: Glycogen phosphorylase, liver form (847 aa).

Ala-2 carries the post-translational modification N-acetylalanine. The residue at position 15 (Ser-15) is a Phosphoserine; by PHK; in form phosphorylase a. AMP contacts are provided by residues 43-45, Tyr-76, and Arg-310; that span reads DRN. N6-succinyllysine is present on Lys-364. Lys-470 bears the N6-acetyllysine mark. Phosphoserine occurs at positions 524, 561, and 639. Lys-681 carries the N6-(pyridoxal phosphate)lysine modification. Position 796 is an N6-acetyllysine (Lys-796).

The protein belongs to the glycogen phosphorylase family. Homodimer; enzymatically active. Interacts with PPP1R3B; recruits the phosphatase PP1 which dephosphorylates and inactivates PYGL/glycogen phosphorylase. Requires pyridoxal 5'-phosphate as cofactor. In terms of processing, acetylation, which is up-regulated by glucose and insulin and down-regulated by glucagon, inhibits the glycogen phosphorylase activity by promoting PPP1R3B-mediated recruitment of phosphatase PP1 and Ser-15 dephosphorylation. Phosphorylation at Ser-15 converts inactive phosphorylase b into active phosphorylase a. Dephosphorylation of Ser-15 by phosphatase PP1 inactivates the enzyme.

The protein resides in the cytoplasm. The protein localises to the cytosol. The catalysed reaction is [(1-&gt;4)-alpha-D-glucosyl](n) + phosphate = [(1-&gt;4)-alpha-D-glucosyl](n-1) + alpha-D-glucose 1-phosphate. Its activity is regulated as follows. Allosterically regulated through the non-covalent binding of metabolites, being activated by AMP and inhibited by ATP, ADP, and glucose-6-phosphate. The activity is also controlled by post-translational modifications including phosphorylation and acetylation. Allosteric enzyme that catalyzes the rate-limiting step in glycogen catabolism, the phosphorolytic cleavage of glycogen to produce glucose-1-phosphate, and plays a central role in maintaining cellular and organismal glucose homeostasis. The sequence is that of Glycogen phosphorylase, liver form from Homo sapiens (Human).